Consider the following 341-residue polypeptide: Glycerol-3-phosphate dehydrogenase [NAD(P)+] (341 aa).

NADPH is bound by residues serine 13, tryptophan 14, and lysine 108. Residues lysine 108, glycine 139, and serine 141 each coordinate sn-glycerol 3-phosphate. Residue alanine 143 coordinates NADPH. Residues lysine 194, aspartate 247, serine 257, arginine 258, and asparagine 259 each contribute to the sn-glycerol 3-phosphate site. Lysine 194 (proton acceptor) is an active-site residue. NADPH is bound at residue arginine 258. NADPH-binding residues include valine 282 and glutamate 284.

The protein belongs to the NAD-dependent glycerol-3-phosphate dehydrogenase family.

It localises to the cytoplasm. It carries out the reaction sn-glycerol 3-phosphate + NAD(+) = dihydroxyacetone phosphate + NADH + H(+). The catalysed reaction is sn-glycerol 3-phosphate + NADP(+) = dihydroxyacetone phosphate + NADPH + H(+). Its pathway is membrane lipid metabolism; glycerophospholipid metabolism. Its function is as follows. Catalyzes the reduction of the glycolytic intermediate dihydroxyacetone phosphate (DHAP) to sn-glycerol 3-phosphate (G3P), the key precursor for phospholipid synthesis. The polypeptide is Glycerol-3-phosphate dehydrogenase [NAD(P)+] (Lactococcus lactis subsp. lactis (strain IL1403) (Streptococcus lactis)).